Reading from the N-terminus, the 470-residue chain is 3-isopropylmalate dehydratase large subunit (470 aa).

Cys-346, Cys-406, and Cys-409 together coordinate [4Fe-4S] cluster.

This sequence belongs to the aconitase/IPM isomerase family. LeuC type 1 subfamily. Heterodimer of LeuC and LeuD. Requires [4Fe-4S] cluster as cofactor.

It catalyses the reaction (2R,3S)-3-isopropylmalate = (2S)-2-isopropylmalate. It functions in the pathway amino-acid biosynthesis; L-leucine biosynthesis; L-leucine from 3-methyl-2-oxobutanoate: step 2/4. Functionally, catalyzes the isomerization between 2-isopropylmalate and 3-isopropylmalate, via the formation of 2-isopropylmaleate. The polypeptide is 3-isopropylmalate dehydratase large subunit (Shouchella clausii (strain KSM-K16) (Alkalihalobacillus clausii)).